Here is a 399-residue protein sequence, read N- to C-terminus: Acetate kinase (399 aa).

Asn-7 contributes to the Mg(2+) binding site. Lys-14 lines the ATP pocket. Position 91 (Arg-91) interacts with substrate. Catalysis depends on Asp-148, which acts as the Proton donor/acceptor. ATP-binding positions include 208–212, 283–285, and 331–335; these read HLGNG, DFR, and GLGEN. Position 384 (Glu-384) interacts with Mg(2+).

The protein belongs to the acetokinase family. In terms of assembly, homodimer. Requires Mg(2+) as cofactor. The cofactor is Mn(2+).

The protein resides in the cytoplasm. It catalyses the reaction acetate + ATP = acetyl phosphate + ADP. It functions in the pathway metabolic intermediate biosynthesis; acetyl-CoA biosynthesis; acetyl-CoA from acetate: step 1/2. Catalyzes the formation of acetyl phosphate from acetate and ATP. Can also catalyze the reverse reaction. This is Acetate kinase from Desulfitobacterium hafniense (strain DSM 10664 / DCB-2).